The following is a 663-amino-acid chain: Rho GTPase-activating protein 18 (663 aa).

Disordered stretches follow at residues 14–73 (AYHP…DESM) and 85–106 (RSNENRQEGQEAIVVKEPDEGE). Residues 27 to 37 (SHVKGGDEATS) are compositionally biased toward basic and acidic residues. Positions 38-51 (SRRYGQYTINQEGS) are enriched in polar residues. Phosphoserine is present on residues Ser65 and Ser68. Positions 85–102 (RSNENRQEGQEAIVVKEP) are enriched in basic and acidic residues. The residue at position 156 (Thr156) is a Phosphothreonine. Disordered regions lie at residues 173-228 (FAQQ…PASE) and 245-277 (KEFSKERTQKISSNDSLPSFRLPKDKTGTTRIG). 2 stretches are compositionally biased toward basic and acidic residues: residues 178-205 (EAQEKPPDDSDLRSVRTNENKGQGKDDQ) and 212-222 (DSKEQISRVPE). Phosphoserine is present on residues Ser260 and Ser263. The Rho-GAP domain occupies 324–523 (IPLTILLEQD…LLIRYQKILW (200 aa)). Ser610 is subject to Phosphoserine.

As to quaternary structure, interacts with MPHOSPH6. As to expression, widely expressed: expressed in most organs, except small intestine.

It is found in the cytoplasm. Rho GTPase activating protein that suppresses F-actin polymerization by inhibiting Rho. Rho GTPase activating proteins act by converting Rho-type GTPases to an inactive GDP-bound state. Plays a key role in tissue tension and 3D tissue shape by regulating cortical actomyosin network formation. Acts downstream of YAP1 and inhibits actin polymerization, which in turn reduces nuclear localization of YAP1. Regulates cell shape, spreading, and migration. This chain is Rho GTPase-activating protein 18, found in Mus musculus (Mouse).